A 257-amino-acid polypeptide reads, in one-letter code: 24 kDa outer membrane protein (257 aa).

The N-terminal stretch at 1–21 (MKNKSKLLACCLMALPISSFS) is a signal peptide.

The protein belongs to the MipA/OmpV family.

The protein localises to the cell outer membrane. The chain is 24 kDa outer membrane protein from Pasteurella multocida (strain Pm70).